The sequence spans 166 residues: Minor capsid protein VP2 (166 aa).

The interval 138-166 (PAPSGFVNPNYQPSPPRLKLGPRPPSTNV) is disordered. Over residues 149–166 (QPSPPRLKLGPRPPSTNV) the composition is skewed to pro residues.

This sequence belongs to the vesivirus VP2 protein family. As to quaternary structure, homooligomer. The portal-like structure consists in 12 copies of VP2. Interacts with capsid protein VP1.

Its subcellular location is the virion. The protein localises to the host cytoplasm. Its function is as follows. Minor structural protein that forms a portal-like structure at a unique three-fold axis of symmetry, following binding to the host receptor. The channel formed by VP2 may allow the delivery of the viral genome through the host endosomal membrane. In Homo sapiens (Human), this protein is Minor capsid protein VP2.